We begin with the raw amino-acid sequence, 457 residues long: MRTEWVAKRRGQVNVSQMHYARQGVITEEMHYVAQRENLPTDLIRDEVARGRMIIPANINHTNLEPMAIGIASKCKVNANIGASPNSSNLQEEVDKLNLAVKYGADTVMDLSTGGGNLDEIRTAIIKASPVPIGTVPVYQALESVHGTIENLTADDFLHIIEKHAQQGVDYQTIHAGILIEHLPLVRNRITGIVSRGGGILARWMLHHHKQNPLYTHFQDIIEIFKRYDVSFSLGDSLRPGCTHDASDEAQLAELKTLGQLTRKAWEDDVQVMVEGPGHVPMDQIEFNVRKQMEECSEAPFYVLGPLVTDIAPGYDHITSAIGAAMAGWYGTAMLCYVTPKEHLGLPNAEDVRNGLIAYKIAAHAADIARHRPGARDRDDELSKARYNFDWNRQFELSLDPERAKEYHDETLPADIYKTAEFCSMCGPKFCPMQTKVDADALTELEKFLAKEPVTQS.

Substrate-binding positions include Asn80, Met109, Tyr139, His175, 195–197, 236–239, and Glu275; these read SRG and DSLR. His279 contributes to the Zn(2+) binding site. Tyr302 contacts substrate. Zn(2+) is bound at residue His343. Cys423, Cys426, and Cys431 together coordinate [4Fe-4S] cluster.

This sequence belongs to the ThiC family. Requires [4Fe-4S] cluster as cofactor.

It carries out the reaction 5-amino-1-(5-phospho-beta-D-ribosyl)imidazole + S-adenosyl-L-methionine = 4-amino-2-methyl-5-(phosphooxymethyl)pyrimidine + CO + 5'-deoxyadenosine + formate + L-methionine + 3 H(+). It functions in the pathway cofactor biosynthesis; thiamine diphosphate biosynthesis. Its function is as follows. Catalyzes the synthesis of the hydroxymethylpyrimidine phosphate (HMP-P) moiety of thiamine from aminoimidazole ribotide (AIR) in a radical S-adenosyl-L-methionine (SAM)-dependent reaction. The polypeptide is Phosphomethylpyrimidine synthase (Nostoc punctiforme (strain ATCC 29133 / PCC 73102)).